The chain runs to 977 residues: Disks large-associated protein 3 (977 aa).

The segment covering 1–10 has biased composition (basic and acidic residues); it reads MRGYHGDRGS. Disordered regions lie at residues 1–24, 52–96, 137–167, 181–289, 398–417, and 529–582; these read MRGY…QHMD, AGLG…MYPG, FHTL…ESPS, AKSH…CLDA, AMGD…SPKA, and PGSS…SADG. Residues 53-73 are compositionally biased toward low complexity; it reads GLGHLSPEGPLSLSEGPSSVG. Phosphoserine is present on Ser-58. The span at 74–87 shows a compositional bias: gly residues; sequence PEGGPGGVGAGGGS. Residues 189 to 201 show a composition bias toward basic and acidic residues; it reads PGKRDYNGPKADG. Residues 221-245 show a composition bias toward basic residues; the sequence is SHHHHHHHHHHHHQSRHGKRSKSKD. Residues 258-271 show a composition bias toward low complexity; it reads GWWSSDDNLDSDSG. Ser-404, Ser-407, Ser-410, and Ser-414 each carry phosphoserine. Residues 538-547 show a composition bias toward pro residues; that stretch reads APPPIPPGSQ. Residues Ser-641 and Ser-643 each carry the phosphoserine modification. 2 disordered regions span residues 739-788 and 906-939; these read EGYP…RTSP and EEKK…RQRQ. Basic and acidic residues-rich tracts occupy residues 767-777 and 925-939; these read GRRDSWMERGS and PVKE…RQRQ. A phosphoserine mark is found at Ser-930, Ser-933, and Ser-965.

The protein belongs to the SAPAP family. As to quaternary structure, interacts with DLG4/PSD-95. In terms of tissue distribution, highly expressed in central and peripherical nervous system (at protein level).

The protein resides in the cell membrane. Its subcellular location is the postsynaptic density. It localises to the synapse. In terms of biological role, may play a role in the molecular organization of synapses and neuronal cell signaling. Could be an adapter protein linking ion channel to the subsynaptic cytoskeleton. May induce enrichment of PSD-95/SAP90 at the plasma membrane. This chain is Disks large-associated protein 3 (Dlgap3), found in Mus musculus (Mouse).